The primary structure comprises 246 residues: Putative KilA-N domain-containing protein L33 (246 aa).

Positions 20 to 129 (RYTKCQYCDI…AKVSLWIEEW (110 aa)) constitute a KilA-N domain.

This chain is Putative KilA-N domain-containing protein L33, found in Acanthamoeba polyphaga mimivirus (APMV).